The sequence spans 660 residues: MAMAGESSGKKIGDCDGKVAGNRQRKVGLIYDETMCKHDTPDGEDHPECPDRIRVIWEKLQLAGVSQRCVVLGSSKAEDKHLQLVHTKDHVNLVKSISTKQKDYRRNRIASQLNSIYLNGGSSEAAYLAAGSVVKLAEKVAEGELDCGFAIVRPPGHHAEADEAMGFCLFNNVAVAASFLLNERPDLGVKKILIVDWDVHHGNGTQKMFWKDPRVLFFSVHRHEYGGFYPAGDDGDYNMVGEGPGEGFNINVPWDQGRCGDADYLAAWDHILIPVAREFNPDVIFLSAGFDAAINDPLGGCCVTPYGYSVMLKKLMEFAQGKIVLALEGGYNLDSIAKSSLACVQVLLEDKQIQGPPEAYPFESTWRVIQAVRKRLCTYWPSLADELSWKLINQKTPTPIILISSSDSETEDNAQGLLDQMSKLSIENPQGTLLENHQVEPASTSWRADLAKVDVWYASFGSNMWKPRFLCYIQGGQVDGLKKVCVGSMDKSPPKETVWETFPHRLFFGRESSVGWGVGGVAFTNPLANLIDQTHMCLYRITLEQFNDVLSQENGLNVDSDSPVFDLAALQLVDNKGSILEAPLNSWYGNVVCLGKERDIPILTMTCTLSAVEKFKSGEIPIRPPAKAYANTLIRGLVEGGRLSKEEAEAYIDKAVSKPL.

The residue at position 2 (Ala-2) is an N-acetylalanine. Positions 26–349 (KVGLIYDETM…SLACVQVLLE (324 aa)) are histone deacetylase. The active-site Proton donor/acceptor is the His-158. Zn(2+) contacts are provided by Asp-198, His-200, and Asp-291.

This sequence belongs to the histone deacetylase family. HD type 2 subfamily. As to quaternary structure, interacts with HDA6. It depends on Zn(2+) as a cofactor. Expressed in stems, leaves, flowers, siliques and mature seeds.

It localises to the nucleus. Its subcellular location is the cytoplasm. The catalysed reaction is N(6)-acetyl-L-lysyl-[histone] + H2O = L-lysyl-[histone] + acetate. With respect to regulation, inhibited by trichostatin A (TSA), a well-known histone deacetylase inhibitor. Responsible for the deacetylation of lysine residues on the N-terminal part of the core histones (H2A, H2B, H3 and H4). Histone deacetylation gives a tag for epigenetic repression and plays an important role in transcriptional regulation, cell cycle progression and developmental events. Histone deacetylases act via the formation of large multiprotein complexes. Involved in the regulation of flowering time by repressing FLC and AGL27/MAF1 expression. Forms a histone deacetylase complex with HDA6, FLD and MSI4/FVE that represses FLC gene expression to control flowering time. Unlike its tandem duplication HDA18, HDA5 does not seem to be required for the cellular patterning in the root epidermis. This is Histone deacetylase 5 from Arabidopsis thaliana (Mouse-ear cress).